A 656-amino-acid chain; its full sequence is NADH-ubiquinone oxidoreductase chain 5 (656 aa).

A run of 17 helical transmembrane segments spans residues 4-21, 28-50, 81-103, 112-129, 133-155, 176-198, 208-230, 243-262, 272-294, 301-319, 329-351, 364-386, 409-431, 452-471, 514-536, 603-625, and 629-651; these read TLII…FFGR, AHLI…FFEV, LTVS…SISY, RFFS…ILVT, YLIM…NFWF, TLLT…STVF, IITI…VGLH, VSAL…LLMR, TVLV…IGLF, VIAY…AVGL, LVNH…HAVA, EFLP…VPFM, IVYF…VLYL, LFMT…FGYL, FVFT…KLLI, SLGN…GLIF, and LLYF…FALL.

Belongs to the complex I subunit 5 family.

It is found in the mitochondrion inner membrane. It catalyses the reaction a ubiquinone + NADH + 5 H(+)(in) = a ubiquinol + NAD(+) + 4 H(+)(out). Functionally, core subunit of the mitochondrial membrane respiratory chain NADH dehydrogenase (Complex I) that is believed to belong to the minimal assembly required for catalysis. Complex I functions in the transfer of electrons from NADH to the respiratory chain. The immediate electron acceptor for the enzyme is believed to be ubiquinone. The chain is NADH-ubiquinone oxidoreductase chain 5 (nad5) from Aspergillus niger.